The following is a 394-amino-acid chain: Elongation factor Tu (394 aa).

In terms of domain architecture, tr-type G spans 10-204 (KEHANIGTIG…AVDDYIPTPE (195 aa)). A G1 region spans residues 19–26 (GHVDHGKT). 19–26 (GHVDHGKT) is a binding site for GTP. Thr26 is a Mg(2+) binding site. The G2 stretch occupies residues 60-64 (GITIN). Positions 81-84 (DCPG) are G3. Residues 81 to 85 (DCPGH) and 136 to 139 (NKVD) each bind GTP. Residues 136–139 (NKVD) are G4. Residues 174–176 (SAL) form a G5 region.

It belongs to the TRAFAC class translation factor GTPase superfamily. Classic translation factor GTPase family. EF-Tu/EF-1A subfamily. In terms of assembly, monomer.

Its subcellular location is the cytoplasm. It carries out the reaction GTP + H2O = GDP + phosphate + H(+). Its function is as follows. GTP hydrolase that promotes the GTP-dependent binding of aminoacyl-tRNA to the A-site of ribosomes during protein biosynthesis. The sequence is that of Elongation factor Tu from Staphylococcus haemolyticus (strain JCSC1435).